The sequence spans 261 residues: Segregation and condensation protein A (261 aa).

Belongs to the ScpA family. In terms of assembly, component of a cohesin-like complex composed of ScpA, ScpB and the Smc homodimer, in which ScpA and ScpB bind to the head domain of Smc. The presence of the three proteins is required for the association of the complex with DNA.

The protein localises to the cytoplasm. Its function is as follows. Participates in chromosomal partition during cell division. May act via the formation of a condensin-like complex containing Smc and ScpB that pull DNA away from mid-cell into both cell halves. The chain is Segregation and condensation protein A from Leptospira interrogans serogroup Icterohaemorrhagiae serovar copenhageni (strain Fiocruz L1-130).